We begin with the raw amino-acid sequence, 292 residues long: 4-hydroxy-tetrahydrodipicolinate synthase (292 aa).

A pyruvate-binding site is contributed by Thr45. The active-site Proton donor/acceptor is Tyr133. Catalysis depends on Lys161, which acts as the Schiff-base intermediate with substrate. A pyruvate-binding site is contributed by Ile203.

The protein belongs to the DapA family. Homotetramer; dimer of dimers.

It is found in the cytoplasm. It carries out the reaction L-aspartate 4-semialdehyde + pyruvate = (2S,4S)-4-hydroxy-2,3,4,5-tetrahydrodipicolinate + H2O + H(+). It participates in amino-acid biosynthesis; L-lysine biosynthesis via DAP pathway; (S)-tetrahydrodipicolinate from L-aspartate: step 3/4. Its function is as follows. Catalyzes the condensation of (S)-aspartate-beta-semialdehyde [(S)-ASA] and pyruvate to 4-hydroxy-tetrahydrodipicolinate (HTPA). This Escherichia fergusonii (strain ATCC 35469 / DSM 13698 / CCUG 18766 / IAM 14443 / JCM 21226 / LMG 7866 / NBRC 102419 / NCTC 12128 / CDC 0568-73) protein is 4-hydroxy-tetrahydrodipicolinate synthase.